An 820-amino-acid polypeptide reads, in one-letter code: DNA replication helicase (820 aa).

Position 90 to 97 (90 to 97) interacts with ATP; that stretch reads GTAGAGKT.

Belongs to the herpesviridae helicase family. In terms of assembly, associates with the primase and the primase-associated factor to form the helicase-primase complex.

The protein localises to the host nucleus. Functionally, component of the helicase/primase complex. Unwinds the DNA at the replication forks and generates single-stranded DNA for both leading and lagging strand synthesis. The primase synthesizes short RNA primers on the lagging strand that the polymerase elongates using dNTPs. Possesses helicase-like motifs and therefore may act as the helicase subunit of the complex. The chain is DNA replication helicase from Human herpesvirus 7 (strain JI) (HHV-7).